A 272-amino-acid chain; its full sequence is HMP-PP phosphatase (272 aa).

Asp-8 functions as the Nucleophile in the catalytic mechanism. Residues Asp-8, Asp-10, and Asp-212 each coordinate Mg(2+).

This sequence belongs to the HAD-like hydrolase superfamily. Cof family. The cofactor is Mg(2+).

It carries out the reaction 4-amino-2-methyl-5-(diphosphooxymethyl)pyrimidine + H2O = 4-amino-2-methyl-5-(phosphooxymethyl)pyrimidine + phosphate + H(+). In terms of biological role, catalyzes the hydrolysis of 4-amino-2-methyl-5-hydroxymethylpyrimidine pyrophosphate (HMP-PP) to 4-amino-2-methyl-5-hydroxymethylpyrimidine phosphate (HMP-P). The polypeptide is HMP-PP phosphatase (Klebsiella pneumoniae (strain 342)).